The following is a 113-amino-acid chain: PTS system fructose-like EIIB component 3 (113 aa).

One can recognise a PTS EIIB type-2 domain in the interval 1–100 (MAYLVAVTAC…PQRVMSAVRK (100 aa)). The active-site Phosphocysteine intermediate is Cys10. Phosphocysteine; by EIIA is present on Cys10.

The protein localises to the cytoplasm. The catalysed reaction is D-fructose(out) + N(pros)-phospho-L-histidyl-[protein] = D-fructose 1-phosphate(in) + L-histidyl-[protein]. Functionally, the phosphoenolpyruvate-dependent sugar phosphotransferase system (sugar PTS), a major carbohydrate active transport system, catalyzes the phosphorylation of incoming sugar substrates concomitantly with their translocation across the cell membrane. The protein is PTS system fructose-like EIIB component 3 (frwD) of Escherichia coli (strain K12).